A 344-amino-acid chain; its full sequence is L-rhamnose-proton symporter (344 aa).

A run of 10 helical transmembrane segments spans residues 4–24 (AITMGIFWHLIGAASAACFYA), 38–58 (WSVGGIVSWLILPWAISALLL), 68–88 (FNLSTLLPVFLFGAMWGIGNI), 101–121 (MGIGIAIGITLIVGTLMTPII), 137–157 (TLLGVFVALIGVGIVTRAGQL), 175–195 (LLLAVMCGIFSAGMSFAMNAA), 214–234 (LPSYVVIMGGGALVNLGFCFI), 259–279 (ILLSALGGLMWYLQFFFYAWG), 290–310 (MSWMLHMSFYVLCGGLVGLVL), and 321–341 (VAVLSLGCVVIIIAANIVGLG).

It belongs to the L-rhamnose transporter (TC 2.A.7.6) family.

The protein localises to the cell inner membrane. It carries out the reaction L-rhamnopyranose(in) + H(+)(in) = L-rhamnopyranose(out) + H(+)(out). Its function is as follows. Uptake of L-rhamnose across the cytoplasmic membrane with the concomitant transport of protons into the cell (symport system). The protein is L-rhamnose-proton symporter of Salmonella gallinarum (strain 287/91 / NCTC 13346).